The primary structure comprises 491 residues: Cobyric acid synthase (491 aa).

Positions 258–445 (ALKVAVPVLG…MHGLFGADAF (188 aa)) constitute a GATase cobBQ-type domain. Cys-340 acts as the Nucleophile in catalysis. His-437 is an active-site residue.

The protein belongs to the CobB/CobQ family. CobQ subfamily.

The protein operates within cofactor biosynthesis; adenosylcobalamin biosynthesis. Its function is as follows. Catalyzes amidations at positions B, D, E, and G on adenosylcobyrinic A,C-diamide. NH(2) groups are provided by glutamine, and one molecule of ATP is hydrogenolyzed for each amidation. This chain is Cobyric acid synthase, found in Mesorhizobium japonicum (strain LMG 29417 / CECT 9101 / MAFF 303099) (Mesorhizobium loti (strain MAFF 303099)).